The chain runs to 354 residues: Methionine aminotransferase BCAT4 (354 aa).

Lys-198 carries the N6-(pyridoxal phosphate)lysine modification.

The protein belongs to the class-IV pyridoxal-phosphate-dependent aminotransferase family. Pyridoxal 5'-phosphate serves as cofactor. Mostly expressed in phloem.

The protein localises to the cytoplasm. It carries out the reaction a 2-oxocarboxylate + L-methionine = 4-methylsulfanyl-2-oxobutanoate + an L-alpha-amino acid. Its function is as follows. Converts 2-oxo acids to branched-chain amino acids. Shows activity with L-Leu, L-Ile and L-Val as amino donors and alpha-keto-glutarate as an amino acceptor, but no activity for D-isomers of Leu, Ile, Val, Asp, Glu or Ala. Acts on methionine and its derivatives and the corresponding 2-oxo acids. Catalyzes the initial deamination of methionine to 4-methylthio-2-oxobutyrate as well as the transamination of other typical intermediates of the methionine chain elongation pathway. This is Methionine aminotransferase BCAT4 (BCAT4) from Arabidopsis thaliana (Mouse-ear cress).